The following is a 211-amino-acid chain: Dual specificity protein phosphatase 26 (211 aa).

In terms of domain architecture, Tyrosine-protein phosphatase spans 60–207; that stretch reads NHADEVWPGL…LLALDRRLRQ (148 aa). Cys152 functions as the Phosphocysteine intermediate in the catalytic mechanism.

The protein belongs to the protein-tyrosine phosphatase family. Non-receptor class dual specificity subfamily. In terms of assembly, interacts with HSF4. As to expression, brain and skeletal muscle. In the brain it is expressed ubiquitously except in the hippocampus.

The protein resides in the cytoplasm. It localises to the nucleus. It is found in the golgi apparatus. The catalysed reaction is O-phospho-L-tyrosyl-[protein] + H2O = L-tyrosyl-[protein] + phosphate. It catalyses the reaction O-phospho-L-seryl-[protein] + H2O = L-seryl-[protein] + phosphate. The enzyme catalyses O-phospho-L-threonyl-[protein] + H2O = L-threonyl-[protein] + phosphate. In terms of biological role, inactivates MAPK1 and MAPK3 which leads to dephosphorylation of heat shock factor protein 4 and a reduction in its DNA-binding activity. The protein is Dual specificity protein phosphatase 26 (Dusp26) of Mus musculus (Mouse).